Reading from the N-terminus, the 55-residue chain is Large ribosomal subunit protein bL33 (55 aa).

A compositionally biased stretch (basic and acidic residues) spans 1–11 (MAKGARDKIKL). The segment at 1–24 (MAKGARDKIKLESTAGTGHFYTTT) is disordered. The span at 14–24 (TAGTGHFYTTT) shows a compositional bias: polar residues.

Belongs to the bacterial ribosomal protein bL33 family.

This chain is Large ribosomal subunit protein bL33, found in Burkholderia multivorans (strain ATCC 17616 / 249).